A 137-amino-acid chain; its full sequence is ATP synthase epsilon chain (137 aa).

It belongs to the ATPase epsilon chain family. F-type ATPases have 2 components, CF(1) - the catalytic core - and CF(0) - the membrane proton channel. CF(1) has five subunits: alpha(3), beta(3), gamma(1), delta(1), epsilon(1). CF(0) has three main subunits: a, b and c.

The protein resides in the cell inner membrane. Produces ATP from ADP in the presence of a proton gradient across the membrane. In Ruegeria sp. (strain TM1040) (Silicibacter sp.), this protein is ATP synthase epsilon chain.